The following is a 210-amino-acid chain: Calcineurin B-like protein 4 (210 aa).

G2 carries N-myristoyl glycine lipidation. 4 consecutive EF-hand domains span residues 31–66 (EVEALRELYNKMSYSIIKDGLIHKEEFQLALFRNSR), 67–102 (KANLFADRVFDLFDLKRNGVIEFGEFVRSLSVFHPK), 104–139 (PKSEKTAFAFKLYDLRGTGYIEKEELREMVLALLDE), and 148–183 (AVEAIVDNTFSQADSNGDGRIDPEEWEEFVKANPAS). D161, N163, D165, R167, and E172 together coordinate Ca(2+).

It belongs to the calcineurin regulatory subunit family. In terms of assembly, homodimer. Interacts with CIPK24. As to expression, expressed in leaves.

The protein resides in the cell membrane. In terms of biological role, acts as a calcium sensor involved in the regulatory pathway for the control of intracellular Na(+) and K(+) homeostasis and salt tolerance. Operates in synergy with CIPK24 to activate the plasma membrane Na(+)/H(+) antiporter SOS1. May function as positive regulator of salt stress responses. CBL proteins interact with CIPK serine-threonine protein kinases. Binding of a CBL protein to the regulatory NAF domain of a CIPK protein lead to the activation of the kinase in a calcium-dependent manner. The sequence is that of Calcineurin B-like protein 4 (CBL4) from Oryza sativa subsp. japonica (Rice).